The chain runs to 462 residues: Na(+)/H(+) antiporter NhaA (462 aa).

11 helical membrane-spanning segments follow: residues I24–L44, L66–L86, A102–L122, G156–A176, L196–I216, P235–I255, H256–G275, P290–E310, M312–G332, M361–L381, and A392–S412.

This sequence belongs to the NhaA Na(+)/H(+) (TC 2.A.33) antiporter family.

It is found in the cell membrane. The enzyme catalyses Na(+)(in) + 2 H(+)(out) = Na(+)(out) + 2 H(+)(in). Functionally, na(+)/H(+) antiporter that extrudes sodium in exchange for external protons. This Bifidobacterium breve (strain NCIMB 8807 / UCC2003) protein is Na(+)/H(+) antiporter NhaA.